We begin with the raw amino-acid sequence, 324 residues long: Putative transcription factor sel-7 (324 aa).

The span at serine 67–alanine 85 shows a compositional bias: polar residues. A disordered region spans residues serine 67 to phenylalanine 151. The segment covering threonine 86–lysine 98 has biased composition (low complexity). Residues serine 106–aspartate 123 show a composition bias toward acidic residues. The span at asparagine 124–glutamine 133 shows a compositional bias: polar residues. Residues serine 134–leucine 146 are compositionally biased toward basic and acidic residues.

In terms of assembly, multimer. May interact with mediator complex subunit mdt-29. As to expression, widely expressed, including in pharyngeal muscle cells and body wall muscle cells.

The protein localises to the nucleus. Putative transcription factor. Positive regulator of the lin-12/Notch signaling pathway. Binds to specific DNA sequences in regulatory elements. Involved in cell fate decisions that require cell-cell interactions, such as the anchor cell (AC) / ventral uterine (VU) precursor cell fate decision. Heterochronic protein which controls the choice of stage specific cell fates, including the larval L3 stage-specific fate of seam cells. Involved in regulating the temporal expression pattern of hunchback-like protein hbl-1, thereby playing a role in the progression between larval stages L2 and L3. The protein is Putative transcription factor sel-7 of Caenorhabditis elegans.